A 135-amino-acid chain; its full sequence is Translation initiation factor 2 subunit beta (135 aa).

This sequence belongs to the eIF-2-beta/eIF-5 family. Heterotrimer composed of an alpha, a beta and a gamma chain.

Its function is as follows. eIF-2 functions in the early steps of protein synthesis by forming a ternary complex with GTP and initiator tRNA. This Methanothermobacter thermautotrophicus (strain ATCC 29096 / DSM 1053 / JCM 10044 / NBRC 100330 / Delta H) (Methanobacterium thermoautotrophicum) protein is Translation initiation factor 2 subunit beta (eif2b).